We begin with the raw amino-acid sequence, 664 residues long: MRYLCKSILLAVHTILLVGSVCCSTDVHNTDDKYALIHVSAHDEQSLHLIKQLQLNDFKYDLDFWKSPSSISDKADIMVKRGKSERMLRQILSFANVTVSMSVPDVEKLIMRNEGTTSKSHLGFGSLSKWLHDDPILDSEPDLDLTKVGALKKAKYPFGDYASYADMVKYMRTIEFYYPRIAKIVRIGATHEGKPIEGLKIGARSSHKKRAVWVDGNIHAREWASSHTALYFINQLVSEYGKDAQITNYVDTLDFYIVPCLNPDGYEYTRTSPIPTVRLWRKNRSPELCRPSLWGGEKCCRGVDLNRNFRFHWAERGSSYEPCSNIYHGEEVFSEPETRAVRNFLATPEMKDRVDAFVTLHSYAQLWIYPYSHEEQNYPEDIGELRKTARKAINRLSRVYGTNYRMGTGADTLSPAAGGSDDWAKSALNVKYVYLIELRPQMELSNGFILHKKELIPTAVETFEGFREVVDAVLTLNNSTSSIGLSSGSNTSRKTISDLQMRKQQYRMRLLASQAAGSTTRSTTTLKTSTTSVSTTSEATSPSKTSRHFDRFTADLNSSTRARPTPPMAPPIMSPSTEFSTTTTEEEDVTGVIRSSSIASRATTYGFFTATKPSAFLDPECRDMRYSCGFWLKNNKQVCEEQQSFMRAQCAYTCKFCTSFIKRH.

The N-terminal stretch at 1–23 is a signal peptide; the sequence is MRYLCKSILLAVHTILLVGSVCC. Residues 24 to 110 constitute a propeptide, activation peptide; sequence STDVHNTDDK…MSVPDVEKLI (87 aa). One can recognise a Peptidase M14 domain in the interval 160-473; sequence DYASYADMVK…EGFREVVDAV (314 aa). Residues H219 and E222 each coordinate Zn(2+). Substrate is bound by residues 219 to 222, R281, and 306 to 307; these read HARE and NR. Residue H361 coordinates Zn(2+). 362–363 contributes to the substrate binding site; that stretch reads SY. The active-site Proton donor/acceptor is E437. Low complexity predominate over residues 512-543; it reads ASQAAGSTTRSTTTLKTSTTSVSTTSEATSPS. The tract at residues 512-590 is disordered; sequence ASQAAGSTTR…TTTTEEEDVT (79 aa). Residues 564-573 are compositionally biased toward pro residues; the sequence is PTPPMAPPIM. A compositionally biased stretch (low complexity) spans 574–583; the sequence is SPSTEFSTTT. A ShKT domain is found at 621 to 657; it reads CRDMRYSCGFWLKNNKQVCEEQQSFMRAQCAYTCKFC. Intrachain disulfides connect C621/C657, C628/C650, and C639/C654.

Belongs to the peptidase M14 family. The cofactor is Zn(2+). Localizes in stripes along the cuticle.

Its subcellular location is the cytoplasmic vesicle. It localises to the secreted. In terms of biological role, may play a role in processing or organization of cuticle collagen proteins, including rol-6 and col-19. The sequence is that of Putative carboxypeptidase suro-1 from Caenorhabditis elegans.